The following is a 196-amino-acid chain: MTWQNDYSRDYEVKNHMECQNRSDKYIWSPHDAYFYKGLSELIVDIDRLIYLSLEKIRKDFVFINLNTDSLTEFINRDNEWLSAVKGKQVVLIAARKSEALANYWYYNSNIRGVVYAGLSRDIRKELAYVINGRFLRKDIKKDKITDREMEIIRMMAQGMLPKSIARIENCSVKTVYTHRRNAEAKLYSKLYKLVQ.

The HTH luxR-type domain occupies 138 to 196; sequence KDIKKDKITDREMEIIRMMAQGMLPKSIARIENCSVKTVYTHRRNAEAKLYSKLYKLVQ. The segment at residues 162–181 is a DNA-binding region (H-T-H motif); that stretch reads PKSIARIENCSVKTVYTHRR.

Belongs to the EcpR/MatA family.

It is found in the cytoplasm. In terms of biological role, part of the ecpRABCDE operon, which encodes the E.coli common pilus (ECP). ECP is found in both commensal and pathogenic strains and plays a dual role in early-stage biofilm development and host cell recognition. Positively regulates the expression of the ecp operon. This Escherichia coli O81 (strain ED1a) protein is HTH-type transcriptional regulator EcpR (ecpR).